A 452-amino-acid polypeptide reads, in one-letter code: FAD transporter (452 aa).

Transmembrane regions (helical) follow at residues 21–41, 49–69, 96–116, 131–151, 167–187, 199–219, 248–270, 283–303, 324–344, 357–377, 392–412, and 417–437; these read LPNLIGIMTILGFSLADTFFI, LAAISFTFPVTLIISSIAIGV, ALLLTFILIASLSALGSIFIE, LIHDYMMYWYVGAPLLVLLMV, MIMTLAAIINLILDPLLIFGI, AIATLFSWLVALSLSGYLLII, AALMNLINPLANAVIMAMLAHID, LESVLLIVVMALSSSLMPFIA, FILVFQTLLYIPLAFFAQPLA, LSFYILVLPCAYGPLGIVIIF, VINLCRLVLLMLPLAALGSYI, and GLLLALPITNLLMGIACYYLA.

It belongs to the multi antimicrobial extrusion (MATE) (TC 2.A.66.1) family.

It localises to the cell inner membrane. In terms of biological role, flavin adenine dinucleotide (FAD) transporter that facilitates export of flavin electron shuttles. The polypeptide is FAD transporter (Shewanella oneidensis (strain ATCC 700550 / JCM 31522 / CIP 106686 / LMG 19005 / NCIMB 14063 / MR-1)).